Reading from the N-terminus, the 81-residue chain is Cytochrome b559 subunit alpha (81 aa).

A helical membrane pass occupies residues 21–35; the sequence is VIHSITIPMLFVAGW. His23 serves as a coordination point for heme.

It belongs to the PsbE/PsbF family. In terms of assembly, heterodimer of an alpha subunit and a beta subunit. PSII is composed of 1 copy each of membrane proteins PsbA, PsbB, PsbC, PsbD, PsbE, PsbF, PsbH, PsbI, PsbJ, PsbK, PsbL, PsbM, PsbT, PsbX, PsbY, PsbZ, Psb30/Ycf12, peripheral proteins PsbO, CyanoQ (PsbQ), PsbU, PsbV and a large number of cofactors. It forms dimeric complexes. The cofactor is heme b.

The protein localises to the cellular thylakoid membrane. Its function is as follows. This b-type cytochrome is tightly associated with the reaction center of photosystem II (PSII). PSII is a light-driven water:plastoquinone oxidoreductase that uses light energy to abstract electrons from H(2)O, generating O(2) and a proton gradient subsequently used for ATP formation. It consists of a core antenna complex that captures photons, and an electron transfer chain that converts photonic excitation into a charge separation. This is Cytochrome b559 subunit alpha from Gloeothece citriformis (strain PCC 7424) (Cyanothece sp. (strain PCC 7424)).